The primary structure comprises 234 residues: Transcriptional regulatory protein CitB (234 aa).

One can recognise a Response regulatory domain in the interval 5-121 (TTLIVEDEPM…RLQHTLERFA (117 aa)). Asp-56 is subject to 4-aspartylphosphate. A DNA-binding region (H-T-H motif) is located at residues 181–200 (ADSLARILGSSKTTARRYLE).

In vitro CitB and the CitA kinase domain form a complex, formation of which is enhanced by ATP. Post-translationally, phosphorylated by CitA.

The protein localises to the cytoplasm. Member of the two-component regulatory system CitA/CitB essential for expression of citrate-specific fermentation genes. Phosphorylated CitB binds to two sites in the citS-citC intergenic region where it probably activates transcription of both genes. The protein is Transcriptional regulatory protein CitB (citB) of Klebsiella pneumoniae.